Here is a 159-residue protein sequence, read N- to C-terminus: Galactose-specific lectin nattectin (159 aa).

The N-terminal stretch at 1 to 21 (MASVPHFTVFLFLACALGIGA) is a signal peptide. A propeptide spanning residues 22 to 24 (NVT) is cleaved from the precursor. Cystine bridges form between C31/C42, C59/C155, and C132/C147. Residues 38–156 (HGSRCFTFHR…CKVKRSFLCA (119 aa)) form the C-type lectin domain. Q122, D124, E130, and N143 together coordinate Ca(2+). The Galactose-binding signature appears at 122–124 (QPD).

In terms of assembly, monomer. Not glycosylated. As to expression, expressed by the venom gland.

Its subcellular location is the secreted. Galactose specific lectin that exhibits hemagglutination activity (minimum hemagluttination concentration = 2.5 ug/well) in a calcium-independent fashion. Has remarkable pro-inflammatory activity, inducing neutrophil mobilization in mice. Plays a crucial role in the innate immune system and chronic manifestations, especially in neutrophil mobilization. The polypeptide is Galactose-specific lectin nattectin (Thalassophryne nattereri (Copper Joe toadfish)).